We begin with the raw amino-acid sequence, 189 residues long: Movement protein p22 (189 aa).

It belongs to the tombusvirus/aureusvirus movement protein p22 family. In terms of assembly, interacts with host protein HFI22. Phosphorylated.

The protein resides in the host membrane. In terms of biological role, cell-to-cell movement. Displays RNA-binding activity. This chain is Movement protein p22, found in Capsicum annuum (Capsicum pepper).